The chain runs to 602 residues: Elongation factor 4 (602 aa).

Residues 7–189 (SRIRNFSIIA…SIVQQVPPPA (183 aa)) enclose the tr-type G domain. GTP is bound by residues 19–24 (DHGKST) and 136–139 (NKID).

This sequence belongs to the TRAFAC class translation factor GTPase superfamily. Classic translation factor GTPase family. LepA subfamily.

Its subcellular location is the cell inner membrane. It catalyses the reaction GTP + H2O = GDP + phosphate + H(+). Its function is as follows. Required for accurate and efficient protein synthesis under certain stress conditions. May act as a fidelity factor of the translation reaction, by catalyzing a one-codon backward translocation of tRNAs on improperly translocated ribosomes. Back-translocation proceeds from a post-translocation (POST) complex to a pre-translocation (PRE) complex, thus giving elongation factor G a second chance to translocate the tRNAs correctly. Binds to ribosomes in a GTP-dependent manner. This Picosynechococcus sp. (strain ATCC 27264 / PCC 7002 / PR-6) (Agmenellum quadruplicatum) protein is Elongation factor 4.